Consider the following 719-residue polypeptide: Potassium channel KOR2 (719 aa).

The Cytoplasmic portion of the chain corresponds to 1-63 (MAEEYELNEI…VIHPNGRWYR (63 aa)). A helical transmembrane segment spans residues 64-84 (IWANMMFLWSIYSTFFTPFEF). At 85–93 (SFFRGLPDQ) the chain is on the extracellular side. A helical transmembrane segment spans residues 94–114 (LLDLECVQLVFLADVAVHFFL). Residues 115-137 (AYRDPHTYRMVHDKRHIALRYIK) are Cytoplasmic-facing. A helical transmembrane segment spans residues 138–158 (GSFALDVLGCFPWDAIYKVTG). Over 159-164 (RVEAVR) the chain is Extracellular. A helical; Voltage-sensor membrane pass occupies residues 165–185 (WLVWVRLYRGRKVMAFFKRVE). Topologically, residues 186-199 (KDIRVSYLLTRIVK) are cytoplasmic. The chain crosses the membrane as a helical span at residues 200–220 (LITVELYCTHTAACGFYYLAT). Residues 221–255 (TLPPAREGGTWIGSLSLGDARYINFREVDLLTRYV) lie on the Extracellular side of the membrane. Residues 256–275 (TSLYLAIVTMATVGYGDIHA) constitute an intramembrane region (pore-forming). The Extracellular portion of the chain corresponds to 276 to 285 (VNTREMAFTV). The chain crosses the membrane as a helical span at residues 286-306 (VYISFSIVLSAYLIGNMTALI). The Cytoplasmic portion of the chain corresponds to 307 to 719 (VKGSRTERFR…LEQARTVATN (413 aa)). A nucleoside 3',5'-cyclic phosphate is bound at residue 383 to 503 (LFRGCSDDFL…SQILSNLLKG (121 aa)). ANK repeat units lie at residues 523–556 (KQES…DPSK), 560–589 (DGRT…NVNS), 593–622 (FGNS…ILNL), 624–653 (DAGG…SPNC), and 657–686 (DQRT…DIQA).

Belongs to the potassium channel family. Plant (TC 1.A.1.4) subfamily.

It is found in the membrane. Probable outward-rectifying potassium channel. The protein is Potassium channel KOR2 of Oryza sativa subsp. japonica (Rice).